The following is a 462-amino-acid chain: Argininosuccinate lyase (462 aa).

This sequence belongs to the lyase 1 family. Argininosuccinate lyase subfamily.

Its subcellular location is the cytoplasm. It carries out the reaction 2-(N(omega)-L-arginino)succinate = fumarate + L-arginine. Its pathway is amino-acid biosynthesis; L-arginine biosynthesis; L-arginine from L-ornithine and carbamoyl phosphate: step 3/3. This Hydrogenovibrio crunogenus (strain DSM 25203 / XCL-2) (Thiomicrospira crunogena) protein is Argininosuccinate lyase.